A 339-amino-acid polypeptide reads, in one-letter code: Phosphate acyltransferase (339 aa).

Belongs to the PlsX family. As to quaternary structure, homodimer. Probably interacts with PlsY.

The protein resides in the cytoplasm. The catalysed reaction is a fatty acyl-[ACP] + phosphate = an acyl phosphate + holo-[ACP]. Its pathway is lipid metabolism; phospholipid metabolism. Catalyzes the reversible formation of acyl-phosphate (acyl-PO(4)) from acyl-[acyl-carrier-protein] (acyl-ACP). This enzyme utilizes acyl-ACP as fatty acyl donor, but not acyl-CoA. In Ruthia magnifica subsp. Calyptogena magnifica, this protein is Phosphate acyltransferase.